The following is a 421-amino-acid chain: Imidazolonepropionase (421 aa).

Fe(3+)-binding residues include H81 and H83. Positions 81 and 83 each coordinate Zn(2+). The 4-imidazolone-5-propanoate site is built by R90, Y153, and H186. Y153 contributes to the N-formimidoyl-L-glutamate binding site. H251 is a Fe(3+) binding site. H251 is a binding site for Zn(2+). A 4-imidazolone-5-propanoate-binding site is contributed by E254. D326 serves as a coordination point for Fe(3+). A Zn(2+)-binding site is contributed by D326. Residues N328 and G330 each contribute to the N-formimidoyl-L-glutamate site. Residue S331 coordinates 4-imidazolone-5-propanoate.

This sequence belongs to the metallo-dependent hydrolases superfamily. HutI family. Zn(2+) serves as cofactor. Requires Fe(3+) as cofactor.

It localises to the cytoplasm. It carries out the reaction 4-imidazolone-5-propanoate + H2O = N-formimidoyl-L-glutamate. The protein operates within amino-acid degradation; L-histidine degradation into L-glutamate; N-formimidoyl-L-glutamate from L-histidine: step 3/3. Its function is as follows. Catalyzes the hydrolytic cleavage of the carbon-nitrogen bond in imidazolone-5-propanoate to yield N-formimidoyl-L-glutamate. It is the third step in the universal histidine degradation pathway. The sequence is that of Imidazolonepropionase from Streptococcus pyogenes serotype M6 (strain ATCC BAA-946 / MGAS10394).